The primary structure comprises 631 residues: Shootin-1 (631 aa).

Met1 is subject to N-acetylmethionine. A phosphoserine mark is found at Ser3 and Ser4. Residues 7 to 353 adopt a coiled-coil conformation; the sequence is EKQLQLITSL…RVNQSENSVP (347 aa). Ser101 is modified (phosphoserine; by PAK1). The residue at position 249 (Ser249) is a Phosphoserine. The interval 343-511 is disordered; the sequence is KRVNQSENSV…SESKSMPVLG (169 aa). Residues 352 to 369 are compositionally biased toward pro residues; it reads VPPPPPPPPPLPPPPPNP. At Ser375 the chain carries Phosphoserine. Residues 403–418 show a composition bias toward basic and acidic residues; that stretch reads TDLKRQAVEEMMDRIK. Positions 456-465 are enriched in polar residues; that stretch reads LNKSTSSRSL. Ser473 bears the Phosphoserine mark. At Thr487 the chain carries Phosphothreonine. The span at 490–505 shows a compositional bias: polar residues; the sequence is ADSSSPTGILATSESK. Ser494 carries the post-translational modification Phosphoserine. A Phosphothreonine modification is found at Thr496. A phosphoserine mark is found at Ser506, Ser515, Ser532, and Ser534. 2 disordered regions span residues 524-566 and 579-631; these read KTLE…IGCR and VVVL…SSNC. Phosphothreonine is present on Thr537. Polar residues predominate over residues 550 to 561; sequence CTSSKVTFQPPS. Over residues 590-631 the composition is skewed to basic and acidic residues; sequence PQTKDQVAEKDPTQHKEDEGEIQPENKEDSIENVRETDSSNC.

This sequence belongs to the shootin family. Interacts with L1CAM; this interaction occurs in axonal growth cones. Interacts with actin filament retrograde flow; this interaction is enhanced in a netrin-1- and PAK1-dependent manner and promotes F-actin-substrate coupling and concomitant formation of traction forces at axonal growth cones. Interacts with RUFY3. Interacts with PFN2. Interacts (via N-terminus) with KIF20B; this interaction is direct and promotes the association of SHTN1 to microtubules in primary neurons. Associates with microtubule. Post-translationally, phosphorylated on Ser-101 and Ser-249 by PAK1 through a CDC42- and RAC1-dependent signaling pathway, which enhances its association with F-actin retrograde flow in filopodia and lamellipodia of axonal growth cones. Phosphorylation on Ser-101 and Ser-249 is increased by netrin-1.

The protein localises to the perikaryon. It is found in the cell projection. The protein resides in the axon. Its subcellular location is the growth cone. It localises to the cytoplasm. The protein localises to the cytoskeleton. It is found in the filopodium. The protein resides in the lamellipodium. Its function is as follows. Involved in the generation of internal asymmetric signals required for neuronal polarization and neurite outgrowth. Mediates netrin-1-induced F-actin-substrate coupling or 'clutch engagement' within the axon growth cone through activation of CDC42, RAC1 and PAK1-dependent signaling pathway, thereby converting the F-actin retrograde flow into traction forces, concomitantly with filopodium extension and axon outgrowth. Plays a role in cytoskeletal organization by regulating the subcellular localization of phosphoinositide 3-kinase (PI3K) activity at the axonal growth cone. Also plays a role in regenerative neurite outgrowth. In the developing cortex, cooperates with KIF20B to promote both the transition from the multipolar to the bipolar stage and the radial migration of cortical neurons from the ventricular zone toward the superficial layer of the neocortex. Involved in the accumulation of phosphatidylinositol 3,4,5-trisphosphate (PIP3) in the growth cone of primary hippocampal neurons. This is Shootin-1 from Homo sapiens (Human).